Reading from the N-terminus, the 259-residue chain is MRWSESVYSLRSTLKPLFQPDSPLTLRKRNKSLCEYNIRRSRRRPEEESIQSLSKHVSTTTQPCPTDGRMMFDLSNPYHSSETVVGRDAEGPANPLDTPFSEFCFSQLVSNSAHSYLDFDLFDEPTPGTNQAQTIEPGQQTSGFENPIPYHTHRNDTPILDWSKLDRYQSLHQHSAAQFYDSLGTEQDDSAARCTLALFSGRIVADKAETNPFLIHKTHRTTVLLQNAHVGGRRQQAVLDKCYTGLGYTSLGSVRTKAR.

The interval 39–66 (RRSRRRPEEESIQSLSKHVSTTTQPCPT) is disordered. Residues 50–64 (IQSLSKHVSTTTQPC) show a composition bias toward polar residues.

Its pathway is mycotoxin biosynthesis. Functionally, part of the gene clusters that mediate the biosynthesis of AM-toxins, host-selective toxins (HSTs) causing Alternaria blotch on apple, a worldwide distributed disease. AM-toxins are cyclic depsipeptides containing the 3 residues 2-hydroxy-isovaleric acid (2-HIV), dehydroalanine, L-alanine which are common for all 3 AM-toxins I to III. The fourth precursor is L-alpha-amino-methoxyphenyl-valeric acid (L-Amv) for AM-toxin I, L-alpha-amino-phenyl-valeric acid (L-Apv) for AM-toxin II, and L-alpha-amino-hydroxyphenyl-valeric acid (L-Ahv) for AM-toxin III. AM-toxins have two target sites for affecting susceptible apple cells; they cause invagination of the plasma membrane and electrolyte loss and chloroplast disorganization. The non-ribosomal peptide synthetase AMT1 contains 4 catalytic modules and is responsible for activation of each residue in AM-toxin. The aldo-keto reductase AMT2 catalyzes the conversion of 2-keto-isovaleric acid (2-KIV) to 2-hydroxy-isovaleric acid (2-HIV), one of the precursor residues incorporated by AMT1 during AM-toxin biosynthesis, by reduction of its ketone to an alcohol. The cytochrome P450 monooxygenase AMT3 and the thioesterase AMT4 are also important for AM-toxin production, but their exact function within the AM-toxin biosynthesis are not known yet. Up to 21 proteins (including AMT1 to AMT4) are predicted to be involved in AM-toxin biosynthesis since their expression ishighly up-regulated in AM-toxin-producing cultures. This Alternaria alternata (Alternaria rot fungus) protein is AM-toxin biosynthesis protein 11.